A 703-amino-acid chain; its full sequence is WD repeat-containing protein pop2 (703 aa).

Polar residues-rich tracts occupy residues 1-27 (MSLSRCPTDNSSSRINSSVPLINSSSP), 63-73 (ESNSCNGNTSS), and 156-178 (SISSNSDNFPPSPKVDTSNTVSP). 2 disordered regions span residues 1 to 73 (MSLS…NTSS) and 156 to 180 (SISSNSDNFPPSPKVDTSNTVSPGS). The segment at 1–170 (MSLSRCPTDN…SDNFPPSPKV (170 aa)) is interaction with pop1. Positions 236-283 (KDILSNLPFSIVQSILLNLDIHSFLSCRLVSPTWNRILDVHTSYWKHM) constitute an F-box domain. 6 WD repeats span residues 389–417 (GHKEGVWAVKIHENTLVSGSIDKTVRVWN), 429–473 (GHIS…RVWK), 505–533 (GHTDSVRTISGYGDILVSGSYDSSIRIWR), 545–575 (GHSLRIYSVLYEPERNICISGSMDKSIRVWD), 587–615 (GHDAFVTLLNVFQNRLISGSADSTIRIWD), and 625–654 (LPSNSGYISSFVSDEHKIISGNDGSVKLWD).

In terms of assembly, homodimer and heterodimer with pop1. Binds to cul1, pip1 and phosphorylated cdc18.

The protein localises to the cytoplasm. It localises to the nucleus. In terms of biological role, involved in maintenance of ploidy through proteasome dependent degradation of CDK inhibitor rum1 and S-phase initiator cdc18. Functions as a recognition factor for rum1 and cdc18, which are subsequently ubiquitinated and targeted to the 26S proteasome for degradation. Together with pop1, required for cig2 instability during G2 and M phase and cig2 degradation in exponentially growing cells. The protein is WD repeat-containing protein pop2 (pop2) of Schizosaccharomyces pombe (strain 972 / ATCC 24843) (Fission yeast).